Reading from the N-terminus, the 616-residue chain is Spastin (616 aa).

Positions 1-44 (MNSPGGRGKKKGSGGPSSPVPPRPPPPCLASSRPAPRPAPPPQS) are disordered. The interval 1-50 (MNSPGGRGKKKGSGGPSSPVPPRPPPPCLASSRPAPRPAPPPQSPHKRNL) is required for nuclear localization. The Cytoplasmic portion of the chain corresponds to 1 to 56 (MNSPGGRGKKKGSGGPSSPVPPRPPPPCLASSRPAPRPAPPPQSPHKRNLYYFSYP). The interval 1 to 80 (MNSPGGRGKK…LGLLFVWLCQ (80 aa)) is required for interaction with ATL1. The interval 1 to 194 (MNSPGGRGKK…LVMAKDRLQL (194 aa)) is required for midbody localization. The segment at 1–300 (MNSPGGRGKK…STPKTNRTNK (300 aa)) is required for interaction with RTN1. A Nuclear localization signal motif is present at residues 4 to 11 (PGGRGKKK). Pro residues-rich tracts occupy residues 18 to 28 (SPVPPRPPPPC) and 35 to 44 (APRPAPPPQS). Residues 50-87 (LYYFSYPLFLGFALLRLVAFHLGLLFVWLCQRFSRALM) form a required for interaction with SSNA1 and microtubules region. The segment at residues 57–77 (LFLGFALLRLVAFHLGLLFVW) is an intramembrane region (helical). The Nuclear export signal motif lies at 59–67 (LGFALLRLV). Residues 78 to 616 (LCQRFSRALM…WNKDFGDTTV (539 aa)) are Cytoplasmic-facing. Residues 112–196 (EVERVRAFHK…MAKDRLQLLE (85 aa)) are sufficient for interaction with CHMP1B. Residues 114–200 (ERVRAFHKQA…RLQLLEKLQP (87 aa)) are required for interaction with microtubules. An MIT domain is found at 120–195 (HKQAFEYISV…VMAKDRLQLL (76 aa)). The disordered stretch occupies residues 223–266 (GHLQSESGAVPKRKDPLTHPSNSLPRSKAIMKTGSTGLSGHHRA). Residues 226 to 328 (QSESGAVPKR…NVDSNLANFI (103 aa)) form a sufficient for interaction with microtubules region. Positions 228-616 (ESGAVPKRKD…WNKDFGDTTV (389 aa)) are sufficient for microtubule severing. Phosphoserine is present on residues serine 245 and serine 268. The interval 270–328 (SGLSIVSGMRQGPGPTTATHKSTPKTNRTNKPSTPTTAPRKKKDLKNFRNVDSNLANFI) is required for interaction with microtubules and microtubule severing. The segment at 278–311 (MRQGPGPTTATHKSTPKTNRTNKPSTPTTAPRKK) is disordered. Positions 283–306 (GPTTATHKSTPKTNRTNKPSTPTT) are enriched in polar residues. Threonine 306 carries the phosphothreonine modification. A Nuclear localization signal motif is present at residues 309-312 (RKKK). Residues 310 to 312 (KKK) form a required for interaction with microtubules region. 382–389 (GPPGNGKT) provides a ligand contact to ATP. Serine 597 carries the post-translational modification Phosphoserine.

The protein belongs to the AAA ATPase family. Spastin subfamily. Homohexamer. Mostly monomeric, but assembles into hexameric structure for short periods of time. Oligomerization seems to be a prerequisite for catalytic activity. Binding to ATP in a cleft between two adjacent subunits stabilizes the homohexameric form. Binds to microtubules at least in part via the alpha-tubulin and beta-tubulin tails. The hexamer adopts a ring conformation through which microtubules pass prior to being severed. Does not interact strongly with tubulin heterodimers. Interacts (via MIT domain) with CHMP1B; the interaction is direct. Interacts with SSNA1. Interacts with ATL1. Interacts with RTN1. Interacts with ZFYVE27. Interacts with REEP1. Interacts (via MIT domain) with IST1.

The protein localises to the membrane. It is found in the endoplasmic reticulum. It localises to the midbody. Its subcellular location is the cytoplasm. The protein resides in the cytoskeleton. The protein localises to the microtubule organizing center. It is found in the centrosome. It localises to the perinuclear region. Its subcellular location is the nucleus. The protein resides in the spindle. The protein localises to the cell projection. It is found in the axon. It catalyses the reaction n ATP + n H2O + a microtubule = n ADP + n phosphate + (n+1) alpha/beta tubulin heterodimers.. Allosteric enzyme with a cooperative mechanism; at least two neighbor subunits influence each other strongly in spastin hexamers. Microtubule binding promotes cooperative interactions among spastin subunits. Functionally, ATP-dependent microtubule severing protein that specifically recognizes and cuts microtubules that are polyglutamylated. Preferentially recognizes and acts on microtubules decorated with short polyglutamate tails: severing activity increases as the number of glutamates per tubulin rises from one to eight, but decreases beyond this glutamylation threshold. Severing activity is not dependent on tubulin acetylation or detyrosination. Microtubule severing promotes reorganization of cellular microtubule arrays and the release of microtubules from the centrosome following nucleation. It is critical for the biogenesis and maintenance of complex microtubule arrays in axons, spindles and cilia. SPAST is involved in abscission step of cytokinesis and nuclear envelope reassembly during anaphase in cooperation with the ESCRT-III complex. Recruited at the midbody, probably by IST1, and participates in membrane fission during abscission together with the ESCRT-III complex. Recruited to the nuclear membrane by IST1 and mediates microtubule severing, promoting nuclear envelope sealing and mitotic spindle disassembly during late anaphase. Required for membrane traffic from the endoplasmic reticulum (ER) to the Golgi and endosome recycling. Recruited by IST1 to endosomes and regulates early endosomal tubulation and recycling by mediating microtubule severing. Probably plays a role in axon growth and the formation of axonal branches. The polypeptide is Spastin (Sus scrofa (Pig)).